We begin with the raw amino-acid sequence, 371 residues long: Peptide chain release factor 2 (371 aa).

Gln-251 is subject to N5-methylglutamine.

It belongs to the prokaryotic/mitochondrial release factor family. Post-translationally, methylated by PrmC. Methylation increases the termination efficiency of RF2.

It localises to the cytoplasm. Functionally, peptide chain release factor 2 directs the termination of translation in response to the peptide chain termination codons UGA and UAA. The polypeptide is Peptide chain release factor 2 (Arthrobacter sp. (strain FB24)).